Reading from the N-terminus, the 756-residue chain is ATP-dependent 6-phosphofructokinase 2 (756 aa).

The interval M1–I393 is N-terminal catalytic PFK domain 1. Residues G20, R81–C82, and G111–S114 contribute to the ATP site. Residue D112 coordinates Mg(2+). Substrate contacts are provided by residues S157–D159, R194, M201–R203, E257, R285, and H291–R294. The Proton acceptor role is filled by D159. The segment at P394–K404 is interdomain linker. The tract at residues T405 to S756 is C-terminal regulatory PFK domain 2. Residues R474, T530–N534, M575–S577, E632, R658, and Y664–L667 contribute to the beta-D-fructose 2,6-bisphosphate site.

Belongs to the phosphofructokinase type A (PFKA) family. ATP-dependent PFK group I subfamily. Eukaryotic two domain clade 'E' sub-subfamily. Homotetramer. The cofactor is Mg(2+).

The protein localises to the cytoplasm. The enzyme catalyses beta-D-fructose 6-phosphate + ATP = beta-D-fructose 1,6-bisphosphate + ADP + H(+). The protein operates within carbohydrate degradation; glycolysis; D-glyceraldehyde 3-phosphate and glycerone phosphate from D-glucose: step 3/4. Its activity is regulated as follows. Allosterically activated by ADP, AMP, or fructose 2,6-bisphosphate, and allosterically inhibited by ATP or citrate. In terms of biological role, catalyzes the phosphorylation of D-fructose 6-phosphate to fructose 1,6-bisphosphate by ATP, the first committing step of glycolysis. This Caenorhabditis elegans protein is ATP-dependent 6-phosphofructokinase 2.